We begin with the raw amino-acid sequence, 355 residues long: uncharacterized protein (355 aa).

The protein localises to the cytoplasm. This is an uncharacterized protein from Saccharomyces cerevisiae (strain ATCC 204508 / S288c) (Baker's yeast).